We begin with the raw amino-acid sequence, 204 residues long: Pre-mRNA leakage protein 1 (204 aa).

The FHA domain occupies 104 to 172; sequence YLVGRELGHS…NGTCLNNVVI (69 aa).

As to quaternary structure, belongs to the pre-mRNA retention and splicing (RES) complex composed of at least BUD13, IST3 and PML1.

It is found in the cytoplasm. It localises to the nucleus. Functionally, required for efficient splicing and pre-mRNA nuclear retention. The polypeptide is Pre-mRNA leakage protein 1 (PML1) (Saccharomyces cerevisiae (strain ATCC 204508 / S288c) (Baker's yeast)).